Here is a 350-residue protein sequence, read N- to C-terminus: S-adenosylmethionine:tRNA ribosyltransferase-isomerase (350 aa).

The protein belongs to the QueA family. Monomer.

Its subcellular location is the cytoplasm. It carries out the reaction 7-aminomethyl-7-carbaguanosine(34) in tRNA + S-adenosyl-L-methionine = epoxyqueuosine(34) in tRNA + adenine + L-methionine + 2 H(+). It participates in tRNA modification; tRNA-queuosine biosynthesis. In terms of biological role, transfers and isomerizes the ribose moiety from AdoMet to the 7-aminomethyl group of 7-deazaguanine (preQ1-tRNA) to give epoxyqueuosine (oQ-tRNA). The chain is S-adenosylmethionine:tRNA ribosyltransferase-isomerase from Vibrio vulnificus (strain YJ016).